Here is a 174-residue protein sequence, read N- to C-terminus: RNA polymerase sigma factor CarQ (174 aa).

A Polymerase core binding motif is present at residues 39 to 52 (DLLQATFLSVIRSR). The segment at 86–106 (YASREDTATPASAAPDDSDPS) is disordered. Residues 136–155 (FEEIGALRGISPGAARLRAH) constitute a DNA-binding region (H-T-H motif).

It belongs to the sigma-70 factor family. ECF subfamily.

In terms of biological role, sigma factors are initiation factors that promote the attachment of RNA polymerase to specific initiation sites and are then released. This sigma factor regulates genes for the light induced biosynthesis of carotenoids. The protein is RNA polymerase sigma factor CarQ (carQ) of Myxococcus xanthus.